Consider the following 256-residue polypeptide: Biosynthetic peptidoglycan transglycosylase (256 aa).

A helical transmembrane segment spans residues 26-48; it reads VARWLAYVGGVFAGAWLATQLYY.

Belongs to the glycosyltransferase 51 family.

It localises to the cell inner membrane. It catalyses the reaction [GlcNAc-(1-&gt;4)-Mur2Ac(oyl-L-Ala-gamma-D-Glu-L-Lys-D-Ala-D-Ala)](n)-di-trans,octa-cis-undecaprenyl diphosphate + beta-D-GlcNAc-(1-&gt;4)-Mur2Ac(oyl-L-Ala-gamma-D-Glu-L-Lys-D-Ala-D-Ala)-di-trans,octa-cis-undecaprenyl diphosphate = [GlcNAc-(1-&gt;4)-Mur2Ac(oyl-L-Ala-gamma-D-Glu-L-Lys-D-Ala-D-Ala)](n+1)-di-trans,octa-cis-undecaprenyl diphosphate + di-trans,octa-cis-undecaprenyl diphosphate + H(+). It functions in the pathway cell wall biogenesis; peptidoglycan biosynthesis. In terms of biological role, peptidoglycan polymerase that catalyzes glycan chain elongation from lipid-linked precursors. The chain is Biosynthetic peptidoglycan transglycosylase from Burkholderia pseudomallei (strain K96243).